The following is a 219-amino-acid chain: Ribosomal RNA small subunit methyltransferase I (219 aa).

Belongs to the methyltransferase superfamily. RsmI family.

The protein localises to the cytoplasm. The catalysed reaction is cytidine(1402) in 16S rRNA + S-adenosyl-L-methionine = 2'-O-methylcytidine(1402) in 16S rRNA + S-adenosyl-L-homocysteine + H(+). Functionally, catalyzes the 2'-O-methylation of the ribose of cytidine 1402 (C1402) in 16S rRNA. The sequence is that of Ribosomal RNA small subunit methyltransferase I from Coprothermobacter proteolyticus (strain ATCC 35245 / DSM 5265 / OCM 4 / BT).